The sequence spans 33 residues: Mu/delta-theraphotoxin-Pm2a (33 aa).

3 disulfide bridges follow: Cys-2–Cys-16, Cys-9–Cys-21, and Cys-15–Cys-27. Phe-33 is modified (phenylalanine amide).

As to expression, expressed by the venom gland.

The protein localises to the secreted. Gating-modifier toxin with very weak activity on Nav1.7/SCN9A and Nav1.8/SCN10A. Shows 22% peak current inhibition (at 10 uM) on Nav1.8/SCN10A sodium channels. Show peak current inhibition and delays fast inactivation on Nav1.7/SCN9A (EC(50)&gt;10 uM). This is Mu/delta-theraphotoxin-Pm2a from Poecilotheria metallica (Metallic blue ornamental tree spider).